A 292-amino-acid polypeptide reads, in one-letter code: RNA-binding P34 protein (292 aa).

A helical membrane pass occupies residues 29–46; the sequence is CAIYTVACRILFLSVGFM. The RNA-binding stretch occupies residues 219 to 292; it reads EGFKSPQVEY…NFKAKNKNNE (74 aa).

It is found in the host endoplasmic reticulum membrane. Acts as a ssRNA-binding protein that may be involved in targeting RNA2 to replication sites or facilitating RNA2 replication. The chain is RNA-binding P34 protein from Lettuce infectious yellows virus (isolate United States/92) (LIYV).